The chain runs to 55 residues: uncharacterized protein (55 aa).

The next 2 helical transmembrane spans lie at Val-2–Ala-19 and Leu-24–Phe-46.

The protein localises to the cell membrane. This is an uncharacterized protein from Alkalihalophilus pseudofirmus (strain ATCC BAA-2126 / JCM 17055 / OF4) (Bacillus pseudofirmus).